We begin with the raw amino-acid sequence, 434 residues long: Bifunctional protein GlmU (434 aa).

A pyrophosphorylase region spans residues 1–226 (MNKNKISIVI…ENEYKGVNSK (226 aa)). UDP-N-acetyl-alpha-D-glucosamine contacts are provided by residues 11-14 (LAAG), K25, Q77, and 84-85 (GT). D105 serves as a coordination point for Mg(2+). Residues G138, E152, N167, and N224 each coordinate UDP-N-acetyl-alpha-D-glucosamine. N224 contacts Mg(2+). The linker stretch occupies residues 227–247 (KDLSDAEIIMQDKIKNSLMES). Positions 248 to 434 (GVTMQLPSTI…DFYYKFFAKK (187 aa)) are N-acetyltransferase. UDP-N-acetyl-alpha-D-glucosamine contacts are provided by R311 and K328. H339 acts as the Proton acceptor in catalysis. Positions 342 and 353 each coordinate UDP-N-acetyl-alpha-D-glucosamine. Residues A356, 362-363 (NY), S381, and A399 contribute to the acetyl-CoA site.

It in the N-terminal section; belongs to the N-acetylglucosamine-1-phosphate uridyltransferase family. This sequence in the C-terminal section; belongs to the transferase hexapeptide repeat family. In terms of assembly, homotrimer. It depends on Mg(2+) as a cofactor.

The protein localises to the cytoplasm. The enzyme catalyses alpha-D-glucosamine 1-phosphate + acetyl-CoA = N-acetyl-alpha-D-glucosamine 1-phosphate + CoA + H(+). The catalysed reaction is N-acetyl-alpha-D-glucosamine 1-phosphate + UTP + H(+) = UDP-N-acetyl-alpha-D-glucosamine + diphosphate. Its pathway is nucleotide-sugar biosynthesis; UDP-N-acetyl-alpha-D-glucosamine biosynthesis; N-acetyl-alpha-D-glucosamine 1-phosphate from alpha-D-glucosamine 6-phosphate (route II): step 2/2. It participates in nucleotide-sugar biosynthesis; UDP-N-acetyl-alpha-D-glucosamine biosynthesis; UDP-N-acetyl-alpha-D-glucosamine from N-acetyl-alpha-D-glucosamine 1-phosphate: step 1/1. It functions in the pathway bacterial outer membrane biogenesis; LPS lipid A biosynthesis. Its function is as follows. Catalyzes the last two sequential reactions in the de novo biosynthetic pathway for UDP-N-acetylglucosamine (UDP-GlcNAc). The C-terminal domain catalyzes the transfer of acetyl group from acetyl coenzyme A to glucosamine-1-phosphate (GlcN-1-P) to produce N-acetylglucosamine-1-phosphate (GlcNAc-1-P), which is converted into UDP-GlcNAc by the transfer of uridine 5-monophosphate (from uridine 5-triphosphate), a reaction catalyzed by the N-terminal domain. This Sulfurimonas denitrificans (strain ATCC 33889 / DSM 1251) (Thiomicrospira denitrificans (strain ATCC 33889 / DSM 1251)) protein is Bifunctional protein GlmU.